Consider the following 231-residue polypeptide: Movement and silencing protein TGBp1 (231 aa).

Residues 1-123 enclose the (+)RNA virus helicase ATP-binding domain; it reads MDVFVKILSD…FKAVLSKRFG (123 aa). One can recognise a (+)RNA virus helicase C-terminal domain in the interval 124–231; sequence SCTAQLLREL…MTPDASYTST (108 aa).

It belongs to the Tymovirales TGBp1 protein family. In terms of assembly, homodimer and homooligomer. Interacts with capsid protein. Interacts with host AGO1; this interaction targets the host protein for degradation, thereby suppressing the antiviral RNA silencing.

The protein localises to the host cytoplasm. In terms of biological role, transports viral genome to neighboring plant cells directly through plasmosdesmata, without any budding. The movement protein allows efficient cell to cell propagation, by bypassing the host cell wall barrier. Increases plasmodesma size exclusion limit. Acts as a suppressor of RNA-mediated gene silencing, also known as post-transcriptional gene silencing (PTGS), a mechanism of plant viral defense that limits the accumulation of viral RNAs. This chain is Movement and silencing protein TGBp1, found in Chrysanthemum morifolium (Florist's daisy).